Consider the following 1307-residue polypeptide: Light-sensor Protein kinase (1307 aa).

The GAF domain occupies 215–394; it reads DIELLCDTIV…VFGMQLNLHV (180 aa). C320 serves as a coordination point for phytochromobilin. Positions 609–680 constitute a PAS domain; that stretch reads LANEMSRVLE…RLLSLALQGE (72 aa). In terms of domain architecture, PAC spans 683–739; that stretch reads QNVEIKLKTFGTQTTERAVILIVNACCSRDASDFVVGVFFVGQDVTEQRMFMDRFTR. The interval 779–1003 is hinge; the sequence is DHATGSVERL…WSFSEKFFQW (225 aa). The region spanning 1004-1307 is the Protein kinase domain; sequence IQITGSLGSG…DSYPSTEEPS (304 aa). Residues 1010–1018 and K1031 contribute to the ATP site; that span reads LGSGSSATV. D1127 is a catalytic residue.

This sequence in the N-terminal section; belongs to the phytochrome family. The protein in the C-terminal section; belongs to the protein kinase superfamily. Ser/Thr protein kinase family. In terms of assembly, homodimer. Post-translationally, contains one covalently linked phytochromobilin chromophore.

It localises to the cell membrane. The enzyme catalyses L-seryl-[protein] + ATP = O-phospho-L-seryl-[protein] + ADP + H(+). It catalyses the reaction L-threonyl-[protein] + ATP = O-phospho-L-threonyl-[protein] + ADP + H(+). Functionally, regulatory photoreceptor which exists in two forms that are reversibly interconvertible by light: the Pr form that absorbs maximally in the red region of the spectrum and the Pfr form that absorbs maximally in the far-red region. Photoconversion of Pr to Pfr induces an array of morphogenic responses, whereas reconversion of Pfr to Pr cancels the induction of those responses. Pfr controls the expression of a number of nuclear genes including those encoding the small subunit of ribulose-bisphosphate carboxylase, chlorophyll A/B binding protein, protochlorophyllide reductase, rRNA, etc. It also controls the expression of its own gene(s) in a negative feedback fashion. The protein is Light-sensor Protein kinase (PHY1) of Ceratodon purpureus (Fire moss).